Consider the following 532-residue polypeptide: Glucan synthesis regulatory protein (532 aa).

The disordered stretch occupies residues 374-532 (TANKRKSMAP…DAEDMKDIEI (159 aa)). The segment covering 381 to 393 (MAPSMASASGMRS) has biased composition (low complexity). Positions 447-457 (PTTSLTASNAS) are enriched in polar residues. The segment covering 475-516 (SGEHSKEDIKVNEDSPAKERTSEDKEKKPETEANGKATESKG) has biased composition (basic and acidic residues).

It belongs to the KNR4/SMI1 family.

Functionally, involved in the regulation of 1,3-beta-glucan synthase activity and cell-wall formation. In Neurospora crassa (strain ATCC 24698 / 74-OR23-1A / CBS 708.71 / DSM 1257 / FGSC 987), this protein is Glucan synthesis regulatory protein (cot-2).